Here is a 126-residue protein sequence, read N- to C-terminus: UPF0325 protein VFMJ11_2099 (126 aa).

Belongs to the UPF0325 family.

In Aliivibrio fischeri (strain MJ11) (Vibrio fischeri), this protein is UPF0325 protein VFMJ11_2099.